The chain runs to 53 residues: MSAYRYANLTNTKYIPSVYAVMATAGCDDRKIKRKEKGKRHAAPLSLMGVHKR.

The disordered stretch occupies residues 34-53; that stretch reads RKEKGKRHAAPLSLMGVHKR.

This is an uncharacterized protein from Treponema pallidum (strain Nichols).